Consider the following 109-residue polypeptide: Period circadian protein (109 aa).

The segment at 59–109 (CFEGSGGSGSSGNFTSGSNLNMRSVTNTSNTGTGTSSESVPLVTLTEALIS) is disordered. Positions 69–98 (SGNFTSGSNLNMRSVTNTSNTGTGTSSESV) are enriched in low complexity.

As to quaternary structure, forms a heterodimer with timeless (TIM); the complex then translocates into the nucleus. Phosphorylated with a circadian rhythmicity, probably by the double-time protein (dbt). Phosphorylation could be implicated in the stability of per monomer and in the formation of heterodimer per-tim.

The protein resides in the nucleus. Its subcellular location is the cytoplasm. It is found in the perinuclear region. Essential for biological clock functions. Determines the period length of circadian and ultradian rhythms; an increase in PER dosage leads to shortened circadian rhythms and a decrease leads to lengthened circadian rhythms. Essential for the circadian rhythmicity of locomotor activity, eclosion behavior, and for the rhythmic component of the male courtship song that originates in the thoracic nervous system. The biological cycle depends on the rhythmic formation and nuclear localization of the TIM-PER complex. Light induces the degradation of TIM, which promotes elimination of PER. Nuclear activity of the heterodimer coordinatively regulates PER and TIM transcription through a negative feedback loop. Behaves as a negative element in circadian transcriptional loop. Does not appear to bind DNA, suggesting indirect transcriptional inhibition. The polypeptide is Period circadian protein (per) (Syritta pipiens (Hoverfly)).